Reading from the N-terminus, the 111-residue chain is Large ribosomal subunit protein uL22 (111 aa).

This sequence belongs to the universal ribosomal protein uL22 family. As to quaternary structure, part of the 50S ribosomal subunit.

In terms of biological role, this protein binds specifically to 23S rRNA; its binding is stimulated by other ribosomal proteins, e.g. L4, L17, and L20. It is important during the early stages of 50S assembly. It makes multiple contacts with different domains of the 23S rRNA in the assembled 50S subunit and ribosome. Its function is as follows. The globular domain of the protein is located near the polypeptide exit tunnel on the outside of the subunit, while an extended beta-hairpin is found that lines the wall of the exit tunnel in the center of the 70S ribosome. In Clostridium tetani (strain Massachusetts / E88), this protein is Large ribosomal subunit protein uL22.